Here is a 156-residue protein sequence, read N- to C-terminus: Cytochrome c-type biogenesis protein CcmE 1 (156 aa).

Residues 1–8 (MNATRKQR) lie on the Cytoplasmic side of the membrane. A helical; Signal-anchor for type II membrane protein transmembrane segment spans residues 9-29 (LWLVIGVLAAAALAVTLIVFA). The Periplasmic segment spans residues 30–156 (LQRNMSYLFT…ATVAPLTAPR (127 aa)). The heme site is built by His123 and Tyr127.

The protein belongs to the CcmE/CycJ family.

Its subcellular location is the cell inner membrane. Its function is as follows. Heme chaperone required for the biogenesis of c-type cytochromes. Transiently binds heme delivered by CcmC and transfers the heme to apo-cytochromes in a process facilitated by CcmF and CcmH. The protein is Cytochrome c-type biogenesis protein CcmE 1 of Xanthomonas axonopodis pv. citri (strain 306).